Here is a 192-residue protein sequence, read N- to C-terminus: UPF0301 protein BTH_I1462 (192 aa).

The protein belongs to the UPF0301 (AlgH) family.

In Burkholderia thailandensis (strain ATCC 700388 / DSM 13276 / CCUG 48851 / CIP 106301 / E264), this protein is UPF0301 protein BTH_I1462.